The chain runs to 360 residues: Glutamate 5-kinase (360 aa).

Lysine 11 contributes to the ATP binding site. 3 residues coordinate substrate: serine 51, aspartate 138, and asparagine 150. Residues 278–356 enclose the PUA domain; that stretch reads KGEIHINECA…GKKPVVHYDY (79 aa).

Belongs to the glutamate 5-kinase family.

It localises to the cytoplasm. The catalysed reaction is L-glutamate + ATP = L-glutamyl 5-phosphate + ADP. The protein operates within amino-acid biosynthesis; L-proline biosynthesis; L-glutamate 5-semialdehyde from L-glutamate: step 1/2. Functionally, catalyzes the transfer of a phosphate group to glutamate to form L-glutamate 5-phosphate. In Bacteroides thetaiotaomicron (strain ATCC 29148 / DSM 2079 / JCM 5827 / CCUG 10774 / NCTC 10582 / VPI-5482 / E50), this protein is Glutamate 5-kinase.